The sequence spans 754 residues: MVVGTKKYSNLDFVPTISDSEDDVPILDSSDDEKVEAKKTTKKRKGKNNKKKVSEGDNLDEDVHEDLDAGFKFDLDADDTTSNFQGWNFLAEGESNKDDAEAFVKKDVDLDKIIRRKGGLVKMAHIDSKQEEETEKEKVEKENDSDDEELAMDGFGMGAPMNNGDENQSEEEEEEEEEEEEEEEEEEEEQEEMTLEKGGKDDEIDEEDDSEEAKADFYAPETEGDEAKKQMYENFNSLSLSRPVLKGLASLGYVKPSPIQSATIPIALLGKDIIAGAVTGSGKTAAFMIPIIERLLYKPAKIASTRVIVLLPTRELAIQVADVGKQIARFVSGITFGLAVGGLNLRQQEQMLKSRPDIVIATPGRFIDHIRNSASFNVDSVEILVMDEADRMLEEGFQDELNEIMGLLPSNRQNLLFSATMNSKIKSLVSLSLKKPVRIMIDPPKKAATKLTQEFVRIRKRDHLKPALLFNLIRKLDPTGQKRIVVFVARKETAHRLRIIMGLLGMSVGELHGSLTQEQRLDSVNKFKNLEVPVLICTDLASRGLDIPKIEVVINYDMPKSYEIYLHRVGRTARAGREGRSVTFVGESSQDRSIVRAAIKSVEENKSLTQGKALGRNVDWVQIEETNKLVESMNDTIEDILVEEKEEKEILRAEMQLRKGENMLKHKKEIQARPRRTWFQSESDKKNSKVLGALSRNKKVTNSKKRKREEAKADGNGARSYRKTKTDRIADQERTFKKQKSTNSNKKKGFKSRR.

2 disordered regions span residues 1–61 (MVVG…NLDE) and 119–227 (GLVK…GDEA). Residues 19 to 34 (DSEDDVPILDSSDDEK) show a composition bias toward acidic residues. The span at 40–51 (TTKKRKGKNNKK) shows a compositional bias: basic residues. The segment covering 124 to 142 (AHIDSKQEEETEKEKVEKE) has biased composition (basic and acidic residues). 2 stretches are compositionally biased toward acidic residues: residues 167–193 (NQSEEEEEEEEEEEEEEEEEEEEQEEM) and 202–211 (DEIDEEDDSE). At Ser-210 the chain carries Phosphoserine. Residues 233–261 (ENFNSLSLSRPVLKGLASLGYVKPSPIQS) carry the Q motif motif. A Helicase ATP-binding domain is found at 264 to 439 (IPIALLGKDI…SLSLKKPVRI (176 aa)). 277-284 (AVTGSGKT) lines the ATP pocket. Positions 387–390 (DEAD) match the DEAD box motif. One can recognise a Helicase C-terminal domain in the interval 450-641 (KLTQEFVRIR…SMNDTIEDIL (192 aa)). A coiled-coil region spans residues 623-669 (IEETNKLVESMNDTIEDILVEEKEEKEILRAEMQLRKGENMLKHKKE). Positions 675–754 (RRTWFQSESD…NKKKGFKSRR (80 aa)) are disordered. A compositionally biased stretch (basic residues) spans 696–707 (RNKKVTNSKKRK). Basic and acidic residues predominate over residues 724 to 736 (TKTDRIADQERTF). Positions 737–754 (KKQKSTNSNKKKGFKSRR) are enriched in basic residues.

It belongs to the DEAD box helicase family. DDX27/DRS1 subfamily. As to quaternary structure, interacts with RRP1 and associates with pre-ribosomal particles.

It localises to the nucleus. Its subcellular location is the nucleolus. The catalysed reaction is ATP + H2O = ADP + phosphate + H(+). In terms of biological role, ATP-binding RNA helicase involved in ribosome assembly. In Saccharomyces cerevisiae (strain YJM789) (Baker's yeast), this protein is ATP-dependent RNA helicase DRS1 (DRS1).